Consider the following 161-residue polypeptide: RNA pyrophosphohydrolase (161 aa).

The region spanning 12–154 (PYRPGVGMMI…KRKLYQAVVK (143 aa)) is the Nudix hydrolase domain. Positions 46–67 (GGIVPGETPSIAAMREMLEEIG) match the Nudix box motif.

This sequence belongs to the Nudix hydrolase family. RppH subfamily. It depends on a divalent metal cation as a cofactor.

Its function is as follows. Accelerates the degradation of transcripts by removing pyrophosphate from the 5'-end of triphosphorylated RNA, leading to a more labile monophosphorylated state that can stimulate subsequent ribonuclease cleavage. This is RNA pyrophosphohydrolase from Rickettsia peacockii (strain Rustic).